The following is a 1007-amino-acid chain: Calmodulin-binding transcription activator 1 (1007 aa).

A DNA-binding region (CG-1) is located at residues 18 to 144; that stretch reads MEQLLSEAQH…YLEVKGNRTS (127 aa). Positions 148-164 are enriched in polar residues; that stretch reads KENNSNSVNGTASVNID. The tract at residues 148 to 227 is disordered; the sequence is KENNSNSVNG…VHGNRVRESD (80 aa). Residues 165–176 show a composition bias toward low complexity; it reads STASPTSTLSSL. Residues 183–202 are compositionally biased toward polar residues; sequence GDSQQASSVLRPSPEPQTGN. A transcription activation region spans residues 233–398; that stretch reads DVRALDTVGN…TVECETAAAG (166 aa). ANK repeat units follow at residues 612–641 and 645–674; these read DGQG…NINF and NGWS…DAGA. IQ domains follow at residues 821–850 and 844–873; these read LSCA…RIVK and IRQR…SVGL. Residues 869 to 891 form a calmodulin-binding region; that stretch reads WSVGLLEKIILRWRRKGNGLRGF. Residues 915 to 943 adopt a coiled-coil conformation; the sequence is QEDEYDYLKEGRKQTEERLQKALTRVKSM. At Ser942 the chain carries Phosphoserine.

The protein belongs to the CAMTA family. Expressed in roots, stems, leaves, pollen and siliques.

It localises to the nucleus. Its function is as follows. Transcription activator that binds calmodulin in a calcium-dependent manner in vitro. Binds to the DNA consensus sequence 5'-[ACG]CGCG[GTC]-3'. Regulates transcriptional activity in response to calcium signals. Involved in freezing tolerance. Involved in freezing tolerance in association with CAMTA2 and CAMTA3. Contributes together with CAMTA2 and CAMTA3 to the positive regulation of the cold-induced expression of DREB1A/CBF3, DREB1B/CBF1 and DREB1C/CBF2. Involved in drought stress responses by regulating several drought-responsive genes. Involved in auxin signaling and responses to abiotic stresses. Activates the expression of the V-PPase proton pump AVP1 in pollen. The protein is Calmodulin-binding transcription activator 1 of Arabidopsis thaliana (Mouse-ear cress).